A 477-amino-acid polypeptide reads, in one-letter code: tRNA-2-methylthio-N(6)-dimethylallyladenosine synthase (477 aa).

One can recognise an MTTase N-terminal domain in the interval 3–120 (KKLHIKTWGC…LPTMIKQVQE (118 aa)). [4Fe-4S] cluster-binding residues include cysteine 12, cysteine 49, cysteine 83, cysteine 157, cysteine 161, and cysteine 164. Residues 143–375 (RAEGATAFVS…QHVINNQSMQ (233 aa)) enclose the Radical SAM core domain. The region spanning 378–441 (RAMLGSTQRI…PNSLRGKFLR (64 aa)) is the TRAM domain.

This sequence belongs to the methylthiotransferase family. MiaB subfamily. As to quaternary structure, monomer. The cofactor is [4Fe-4S] cluster.

The protein localises to the cytoplasm. It carries out the reaction N(6)-dimethylallyladenosine(37) in tRNA + (sulfur carrier)-SH + AH2 + 2 S-adenosyl-L-methionine = 2-methylsulfanyl-N(6)-dimethylallyladenosine(37) in tRNA + (sulfur carrier)-H + 5'-deoxyadenosine + L-methionine + A + S-adenosyl-L-homocysteine + 2 H(+). In terms of biological role, catalyzes the methylthiolation of N6-(dimethylallyl)adenosine (i(6)A), leading to the formation of 2-methylthio-N6-(dimethylallyl)adenosine (ms(2)i(6)A) at position 37 in tRNAs that read codons beginning with uridine. The protein is tRNA-2-methylthio-N(6)-dimethylallyladenosine synthase of Aeromonas hydrophila subsp. hydrophila (strain ATCC 7966 / DSM 30187 / BCRC 13018 / CCUG 14551 / JCM 1027 / KCTC 2358 / NCIMB 9240 / NCTC 8049).